The primary structure comprises 207 residues: TM2 domain-containing protein 1 (207 aa).

The first 37 residues, 1 to 37, serve as a signal peptide directing secretion; the sequence is MAAAWPSGPSAPEAVTARLVGVLWFVSVTTGPWGAVA. The Extracellular portion of the chain corresponds to 40-128; that stretch reads AGGEESLKCE…YSYKVAVALS (89 aa). Asn-72, Asn-75, Asn-87, and Asn-96 each carry an N-linked (GlcNAc...) asparagine glycan. The TM2 domain maps to 118 to 166; it reads GYSYKVAVALSLFLGWLGADRFYLGYPALGLLKFCTVGFCGIGSLIDFI. Residues 129–149 traverse the membrane as a helical segment; that stretch reads LFLGWLGADRFYLGYPALGLL. At 150-153 the chain is on the cytoplasmic side; it reads KFCT. The helical transmembrane segment at 154-174 threads the bilayer; that stretch reads VGFCGIGSLIDFILISMQIVG. Over 175 to 207 the chain is Extracellular; it reads PSDGSSYIIDYYGTRLTRLSITNETFRKTQLYP. Asn-197 is a glycosylation site (N-linked (GlcNAc...) asparagine).

Belongs to the TM2 family. Interacts with APP beta-APP42 (amyloid-beta protein 42). Post-translationally, N-glycosylated. As to expression, widely expressed.

It is found in the membrane. In terms of biological role, may participate in amyloid-beta-induced apoptosis via its interaction with beta-APP42. The protein is TM2 domain-containing protein 1 (TM2D1) of Homo sapiens (Human).